The sequence spans 337 residues: Glutaminase-asparaginase (337 aa).

One can recognise an Asparaginase/glutaminase domain in the interval 10-337; the sequence is ANVVILATGG…KELQRIFWEY (328 aa). Catalysis depends on Thr20, which acts as the Acyl-ester intermediate. Substrate-binding positions include Ser67 and 100 to 101; that span reads TD.

Belongs to the asparaginase 1 family. Homotetramer.

The protein localises to the periplasm. The catalysed reaction is L-glutamine + H2O = L-glutamate + NH4(+). It catalyses the reaction L-asparagine + H2O = L-aspartate + NH4(+). The sequence is that of Glutaminase-asparaginase (ansB) from Pseudomonas sp. (strain ATCC 29598 / 7A).